Consider the following 334-residue polypeptide: Transaldolase (334 aa).

K136 (schiff-base intermediate with substrate) is an active-site residue.

This sequence belongs to the transaldolase family. Type 1 subfamily. In terms of assembly, homodimer.

It is found in the cytoplasm. The catalysed reaction is D-sedoheptulose 7-phosphate + D-glyceraldehyde 3-phosphate = D-erythrose 4-phosphate + beta-D-fructose 6-phosphate. It participates in carbohydrate degradation; pentose phosphate pathway; D-glyceraldehyde 3-phosphate and beta-D-fructose 6-phosphate from D-ribose 5-phosphate and D-xylulose 5-phosphate (non-oxidative stage): step 2/3. In terms of biological role, transaldolase is important for the balance of metabolites in the pentose-phosphate pathway. The chain is Transaldolase from Nostoc punctiforme (strain ATCC 29133 / PCC 73102).